Reading from the N-terminus, the 150-residue chain is Transcriptional repressor NrdR (150 aa).

Residues 3 to 34 (CPFCGQLDSKVVDSRPDKGGAAIRRRRECESC) fold into a zinc finger. The ATP-cone domain occupies 49 to 139 (PLVLKKDGRR…VYRSFKDVNE (91 aa)).

Belongs to the NrdR family. Zn(2+) is required as a cofactor.

In terms of biological role, negatively regulates transcription of bacterial ribonucleotide reductase nrd genes and operons by binding to NrdR-boxes. The polypeptide is Transcriptional repressor NrdR (Geobacter sulfurreducens (strain ATCC 51573 / DSM 12127 / PCA)).